Reading from the N-terminus, the 339-residue chain is Ketol-acid reductoisomerase (NADP(+)) (339 aa).

The KARI N-terminal Rossmann domain occupies 1–182 (MRVYYDRDAD…GGGRSGVIET (182 aa)). NADP(+) contacts are provided by residues 24–27 (YGSQ), Arg48, Ser51, Thr53, and 83–86 (DELQ). The active site involves His108. Gly134 provides a ligand contact to NADP(+). Residues 183-328 (TFKEECETDL…GKLRAMMPWI (146 aa)) form the KARI C-terminal knotted domain. 4 residues coordinate Mg(2+): Asp191, Glu195, Glu227, and Glu231. A substrate-binding site is contributed by Ser252.

Belongs to the ketol-acid reductoisomerase family. Mg(2+) serves as cofactor.

The enzyme catalyses (2R)-2,3-dihydroxy-3-methylbutanoate + NADP(+) = (2S)-2-acetolactate + NADPH + H(+). It carries out the reaction (2R,3R)-2,3-dihydroxy-3-methylpentanoate + NADP(+) = (S)-2-ethyl-2-hydroxy-3-oxobutanoate + NADPH + H(+). The protein operates within amino-acid biosynthesis; L-isoleucine biosynthesis; L-isoleucine from 2-oxobutanoate: step 2/4. Its pathway is amino-acid biosynthesis; L-valine biosynthesis; L-valine from pyruvate: step 2/4. Functionally, involved in the biosynthesis of branched-chain amino acids (BCAA). Catalyzes an alkyl-migration followed by a ketol-acid reduction of (S)-2-acetolactate (S2AL) to yield (R)-2,3-dihydroxy-isovalerate. In the isomerase reaction, S2AL is rearranged via a Mg-dependent methyl migration to produce 3-hydroxy-3-methyl-2-ketobutyrate (HMKB). In the reductase reaction, this 2-ketoacid undergoes a metal-dependent reduction by NADPH to yield (R)-2,3-dihydroxy-isovalerate. The sequence is that of Ketol-acid reductoisomerase (NADP(+)) from Brucella melitensis biotype 2 (strain ATCC 23457).